Reading from the N-terminus, the 579-residue chain is Membrane protein insertase YidC (579 aa).

Residues Leu10 to His30 traverse the membrane as a helical segment. The disordered stretch occupies residues Pro35–Lys61. A run of 5 helical transmembrane segments spans residues Phe330–Leu350, Asp351–Ile371, Val423–Tyr443, Leu478–Ile498, and Pro523–Phe543. Basic and acidic residues predominate over residues Ser560 to Lys572. Residues Ser560 to Ala579 form a disordered region.

It belongs to the OXA1/ALB3/YidC family. Type 1 subfamily. Interacts with the Sec translocase complex via SecD. Specifically interacts with transmembrane segments of nascent integral membrane proteins during membrane integration.

It localises to the cell inner membrane. Its function is as follows. Required for the insertion and/or proper folding and/or complex formation of integral membrane proteins into the membrane. Involved in integration of membrane proteins that insert both dependently and independently of the Sec translocase complex, as well as at least some lipoproteins. Aids folding of multispanning membrane proteins. The polypeptide is Membrane protein insertase YidC (Zymomonas mobilis subsp. mobilis (strain ATCC 31821 / ZM4 / CP4)).